The primary structure comprises 134 residues: Glycine cleavage system H protein (134 aa).

The region spanning 24-106 is the Lipoyl-binding domain; the sequence is TVRVGITDYA…YGAGWLLDIQ (83 aa). An N6-lipoyllysine modification is found at Lys65.

The protein belongs to the GcvH family. In terms of assembly, the glycine cleavage system is composed of four proteins: P, T, L and H. (R)-lipoate serves as cofactor.

In terms of biological role, the glycine cleavage system catalyzes the degradation of glycine. The H protein shuttles the methylamine group of glycine from the P protein to the T protein. In Mycobacterium tuberculosis (strain ATCC 25177 / H37Ra), this protein is Glycine cleavage system H protein.